Consider the following 304-residue polypeptide: DCN1-like protein 3 (304 aa).

2 disordered regions span residues 1–87 (MGQC…EESS) and 284–304 (EGEG…EEQT). G2 is lipidated: N-myristoyl glycine. The DCUN1 domain maps to 86–278 (SSLQRLEELF…LFDTFVEWEM (193 aa)).

Part of a complex containing DCUN1D3, CUL3 and RBX1. Interacts (via the DCUN1 domain) with the unneddylated cullins: interacts with CUL1, CUL2, CUL3, CUL4A, CUL4B and CUL5; these interactions promote the cullin neddylation and the identity of the cullin dictates the affinity of the interaction. Interacts preferentially with CUL3; this interaction triggers the relocalization of CUL3 to the cell membrane where CUL3 is neddylated. Interacts (via DCUN1 domain) with RBX1. May also interact with regulators or subunits of cullin-RING ligases such as RNF7, ELOB and DDB1; these interactions are bridged by cullins. Interacts (via DCUN1 domain) with CAND1; this interaction is bridged by cullins and strongly inhibits cullin neddylation. These CAND-cullin-DCNL complexes can only be neddylated in the presence of a substrate adapter. Interacts (via DCUN1 domain) with the N-terminally acetylated form of UBE2M and UBE2F.

It is found in the cell membrane. The protein resides in the cytoplasm. The protein localises to the nucleus. Its subcellular location is the perinuclear region. Its function is as follows. Contributes to the neddylation of all cullins by transferring NEDD8 from N-terminally acetylated NEDD8-conjugating E2s enzyme to different cullin C-terminal domain-RBX complexes and may play a role in the cell cycle progression by regulating the SCF ubiquitin E3 ligase complex, after UV damage. At the cell membrane, can promote and as well inhibit cullins neddylation. The polypeptide is DCN1-like protein 3 (Bos taurus (Bovine)).